Consider the following 270-residue polypeptide: Protein MGF 110-1L (270 aa).

The first 26 residues, 1-26 (MLGLQIFTLLSIPTLLYTYEIEPLER), serve as a signal peptide directing secretion. The Extracellular portion of the chain corresponds to 27–117 (TSTPPEKEFG…HERHEADIRK (91 aa)). One copy of the A repeat lies at 27-146 (TSTPPEKEFG…YIRKRSLQTV (120 aa)). Asparagine 75 is a glycosylation site (N-linked (GlcNAc...) asparagine; by host). A helical transmembrane segment spans residues 118-138 (WQKLLTYGFYLAGCILAVNYI). Topologically, residues 139–145 (RKRSLQT) are cytoplasmic. The helical transmembrane segment at 146–166 (VMYLLVFLVISFLLSQLMLYG) threads the bilayer. One copy of the B repeat lies at 147-270 (MYLLVFLVIS…DNLMKKQDIM (124 aa)). Over 167–270 (ELEDKKHKIG…DNLMKKQDIM (104 aa)) the chain is Extracellular.

It belongs to the asfivirus MGF 110 family.

It is found in the membrane. Plays a role in virus cell tropism, and may be required for efficient virus replication in macrophages. This is Protein MGF 110-1L from African swine fever virus (isolate Pig/Portugal/OURT88/1988) (ASFV).